We begin with the raw amino-acid sequence, 93 residues long: DNA-binding protein HB1 (93 aa).

This sequence belongs to the bacterial histone-like protein family. As to quaternary structure, homodimer.

Histone-like DNA-binding protein which is capable of wrapping DNA to stabilize it, and thus to prevent its denaturation under extreme environmental conditions. This is DNA-binding protein HB1 (hup) from Bifidobacterium longum (strain NCC 2705).